The chain runs to 102 residues: Small ribosomal subunit protein eS24 (102 aa).

It belongs to the eukaryotic ribosomal protein eS24 family.

The chain is Small ribosomal subunit protein eS24 from Halorubrum lacusprofundi (strain ATCC 49239 / DSM 5036 / JCM 8891 / ACAM 34).